Consider the following 413-residue polypeptide: Methylaspartate ammonia-lyase (413 aa).

Gln172 is a (2S,3S)-3-methyl-L-aspartate binding site. The Mg(2+) site is built by Asp238, Glu273, and Asp307. Position 329 (Gln329) interacts with (2S,3S)-3-methyl-L-aspartate. The Proton acceptor role is filled by Lys331. Residues 360 to 361 (TC) and Cys361 contribute to the (2S,3S)-3-methyl-L-aspartate site.

Belongs to the methylaspartate ammonia-lyase family. In terms of assembly, homodimer. It depends on Mg(2+) as a cofactor.

It catalyses the reaction (2S,3S)-3-methyl-L-aspartate = mesaconate + NH4(+). The protein operates within amino-acid degradation; L-glutamate degradation via mesaconate pathway; acetate and pyruvate from L-glutamate: step 2/4. Its activity is regulated as follows. Inhibited by calcium ions. Its function is as follows. Involved in the methylaspartate cycle. Catalyzes the formation of the alpha,beta-unsaturated bond by the reversible anti elimination of ammonia from L-threo-beta-methylaspartate (L-threo-(2S,3S)-3-methylaspartate) to give mesaconate. It can also use L-erythro-beta-methylaspartate (L-erythro-(2S,3R)-3-methylaspartate), L-aspartate, fumarate and ethylfumarate as substrates. This is Methylaspartate ammonia-lyase from Clostridium tetanomorphum.